The primary structure comprises 1161 residues: DNA-directed RNA polymerase III subunit 2 (1161 aa).

The C4-type zinc-finger motif lies at Cys1104–Cys1125.

This sequence belongs to the RNA polymerase beta chain family. In terms of assembly, component of the RNA polymerase III (Pol III) complex consisting of 17 subunits.

It localises to the nucleus. It catalyses the reaction RNA(n) + a ribonucleoside 5'-triphosphate = RNA(n+1) + diphosphate. Functionally, DNA-dependent RNA polymerase catalyzes the transcription of DNA into RNA using the four ribonucleoside triphosphates as substrates. Second largest core component of RNA polymerase III which synthesizes small RNAs, such as 5S rRNA and tRNAs. Proposed to contribute to the polymerase catalytic activity and forms the polymerase active center together with the largest subunit. Pol III is composed of mobile elements and NRPC2 is part of the core element with the central large cleft and probably a clamp element that moves to open and close the cleft. Its function is as follows. Essential for the completion of the three rounds of mitosis in female megaspores required for the development of mature gametophytes. This chain is DNA-directed RNA polymerase III subunit 2, found in Arabidopsis thaliana (Mouse-ear cress).